Reading from the N-terminus, the 213-residue chain is Peroxisomal protein 2 (213 aa).

The Peroxisomal target signal 1 (PTS1) motif lies at 211 to 213 (ETL).

This sequence belongs to the PXP2 family.

The protein resides in the peroxisome matrix. Its subcellular location is the cytoplasm. It is found in the cytosol. The protein localises to the nucleus. Its function is as follows. Probably involved in peroxisome formation or maintenance as well as in amino acid metabolism. The polypeptide is Peroxisomal protein 2 (Schizosaccharomyces pombe (strain 972 / ATCC 24843) (Fission yeast)).